A 586-amino-acid polypeptide reads, in one-letter code: Major facilitator superfamily domain-containing protein 6-like (586 aa).

The next 2 helical transmembrane spans lie at 50–70 (ILMGTKHLIATCWIPFCAFLA) and 78–98 (MFLTGSLLSSAGASLLMVLVP). Positions 218–237 (GPVNLSKPQGDTQTPDHSSK) are disordered. The segment covering 223–237 (SKPQGDTQTPDHSSK) has biased composition (polar residues). 9 helical membrane passes run 240-260 (PWTFILSLGVVVFWELLAAPL), 284-304 (LWVWKLLGVSAGVCGIAALVG), 318-338 (VIYFYSYSLVSTLALAVSTAF), 365-385 (LILLAFTVFWIGATASTVQDF), 397-417 (ELVMGFSVALSLLGEILFHPF), 428-448 (VGVLGLGLGCLALQVLYYAFI), 454-474 (VLPVQILSTISSGALWWAVGA), 494-514 (GHFYGSGCSLGSFVGGFVVLH), and 519-538 (VLYEACCVVLLLWLALFLSI).

It belongs to the major facilitator superfamily. MFSD6 family.

The protein localises to the membrane. The chain is Major facilitator superfamily domain-containing protein 6-like (Mfsd6l) from Mus musculus (Mouse).